The chain runs to 377 residues: Nitric oxide reductase FlRd-NAD(+) reductase (377 aa).

The protein belongs to the FAD-dependent oxidoreductase family. Requires FAD as cofactor.

Its subcellular location is the cytoplasm. It catalyses the reaction 2 reduced [nitric oxide reductase rubredoxin domain] + NAD(+) + H(+) = 2 oxidized [nitric oxide reductase rubredoxin domain] + NADH. The protein operates within nitrogen metabolism; nitric oxide reduction. In terms of biological role, one of at least two accessory proteins for anaerobic nitric oxide (NO) reductase. Reduces the rubredoxin moiety of NO reductase. The sequence is that of Nitric oxide reductase FlRd-NAD(+) reductase from Escherichia coli O7:K1 (strain IAI39 / ExPEC).